Here is a 290-residue protein sequence, read N- to C-terminus: Nucleoid occlusion protein (290 aa).

Positions 153 to 172 form a DNA-binding region, H-T-H motif; it reads EALAQRLGKGQSTIANKLRL.

This sequence belongs to the ParB family.

It localises to the cytoplasm. The protein resides in the nucleoid. Its function is as follows. Effects nucleoid occlusion by binding relatively nonspecifically to DNA and preventing the assembly of the division machinery in the vicinity of the nucleoid, especially under conditions that disturb the cell cycle. It helps to coordinate cell division and chromosome segregation by preventing the formation of the Z ring through the nucleoid, which would cause chromosome breakage. The polypeptide is Nucleoid occlusion protein (Bacillus anthracis (strain A0248)).